The primary structure comprises 261 residues: MIVVKVGGSVICKDLSKVVENLPKYAGEAVVVHGGGCLVNELLKRMGIEPKFLTHPGGVVSRYTDLETLKVFVMAMSWINKQLVASLFARGVEAVGLTGADGGVVRARRKEKVLVVDERGRQRVVDGGYVGKIVDVNVKALAPPPLKVLAPIAVSEKGELLNVDGDQLAFEVAARAGAGRLVILSDVDGLILGGRVVPRLTPEEAEELAKSEEVRGGMKRKLLMAAEAARRGVEVVISNGLADSPIDAALGGAGTHISRNI.

Residues 35-36 (GG), Arg-62, and Asn-162 each bind substrate.

This sequence belongs to the acetylglutamate kinase family. LysZ subfamily.

Its subcellular location is the cytoplasm. The catalysed reaction is [amino-group carrier protein]-C-terminal-N-(1,4-dicarboxybutan-1-yl)-L-glutamine + ATP = [amino-group carrier protein]-C-terminal-N-(1-carboxy-5-phosphooxy-5-oxopentan-1-yl)-L-glutamine + ADP. It carries out the reaction [amino-group carrier protein]-C-terminal-gamma-(L-glutamyl)-L-glutamate + ATP = [amino-group carrier protein]-C-terminal-gamma-(5-phospho-L-glutamyl)-L-glutamate + ADP. It functions in the pathway amino-acid biosynthesis; L-lysine biosynthesis via AAA pathway; L-lysine from L-alpha-aminoadipate (Thermus route): step 2/5. The protein operates within amino-acid biosynthesis; L-arginine biosynthesis. Functionally, involved in both the arginine and lysine biosynthetic pathways. Phosphorylates the LysW-bound precursors glutamate (for arginine biosynthesis), respectively alpha-aminoadipate (for lysine biosynthesis). This is Putative [LysW]-aminoadipate/[LysW]-glutamate kinase from Pyrobaculum calidifontis (strain DSM 21063 / JCM 11548 / VA1).